Here is a 143-residue protein sequence, read N- to C-terminus: MAKKIIGFIKLQIPAGKANPSPPVGPALGQRGLNIMEFCKAFNAQTQGMEPGLPVPVVITAFADKSFTFVMKSPPATVLIKKAAGIQKGSAKPHTDKVGKITRAQAEEIAKAKNADLTAADLDAAVRTIAGSARSMGITVEGL.

This sequence belongs to the universal ribosomal protein uL11 family. As to quaternary structure, part of the ribosomal stalk of the 50S ribosomal subunit. Interacts with L10 and the large rRNA to form the base of the stalk. L10 forms an elongated spine to which L12 dimers bind in a sequential fashion forming a multimeric L10(L12)X complex. In terms of processing, one or more lysine residues are methylated.

Forms part of the ribosomal stalk which helps the ribosome interact with GTP-bound translation factors. The sequence is that of Large ribosomal subunit protein uL11 from Ralstonia pickettii (strain 12J).